The sequence spans 356 residues: GTPase Obg (356 aa).

The region spanning 1-159 (MKFLDEAKVY…RWIWLRMKLI (159 aa)) is the Obg domain. The region spanning 160 to 327 (ADAGLVGLPN…ALRKLADVIS (168 aa)) is the OBG-type G domain. Residues 166–173 (GLPNAGKS), 191–195 (FTTLH), 212–215 (DIPG), 279–282 (NKID), and 308–310 (SGA) contribute to the GTP site. The Mg(2+) site is built by Ser-173 and Thr-193. The tract at residues 332-356 (SIKAKSTSDSAATEEPWAAPLPPQG) is disordered.

It belongs to the TRAFAC class OBG-HflX-like GTPase superfamily. OBG GTPase family. Monomer. Mg(2+) is required as a cofactor.

The protein localises to the cytoplasm. In terms of biological role, an essential GTPase which binds GTP, GDP and possibly (p)ppGpp with moderate affinity, with high nucleotide exchange rates and a fairly low GTP hydrolysis rate. Plays a role in control of the cell cycle, stress response, ribosome biogenesis and in those bacteria that undergo differentiation, in morphogenesis control. This is GTPase Obg from Bradyrhizobium sp. (strain BTAi1 / ATCC BAA-1182).